The primary structure comprises 223 residues: UPF0441 protein YgiB (223 aa).

The span at 178-195 (TVPKTAMAPKPATTTTVT) shows a compositional bias: low complexity. The tract at residues 178–223 (TVPKTAMAPKPATTTTVTRGGFGESVAKQSTMQRSAAGTSTRSMGG) is disordered. Over residues 204-223 (AKQSTMQRSAAGTSTRSMGG) the composition is skewed to polar residues.

The protein belongs to the UPF0441 family.

This Salmonella heidelberg (strain SL476) protein is UPF0441 protein YgiB.